Here is a 1573-residue protein sequence, read N- to C-terminus: MAEPTKISILGRESIVADCGIWGTYIVQDLLTNLPSTTYVLVTDTNLGSIYREKFAKIFNEAAAALSPAPRLLTKEIPPGENSKSRQGKADIEDWMLQQTCGRDTVIIALGGGVIGDLLGFVAATYMRGIRFVQVPTTLLAMVDSSIGGKTAIDTPLGKNLIGAIWQPHRIYIDIDFIDTLPEREFINGMAEVIKTAAISDEKEFAALEQHADAILKAARSKPGKGRFDLVRQVVKDRIVASARHKAFVVTADEREGGLRNLLNLGHSIGHAIEAILSPQVLHGECVAIGMVKELDLARYLGILKPVAVSRMVKCLSKYGLPTSLKDSRVRKHTAGKHCSLEQMMANMALDKKNDGPRKKVVLLSAIGQTYEPKASVVSNEDIRAVLAPSIEVIPGVPKDLNVVCAPPGSKSISNRALVLAALGSGTVRVKNLLHSDDTEVMLNALERLGAATFAWEDEGEVLVVNGNGGKMQASPTELYLGNAGTASRFLTSVATLSGKGSVDYNILTGNNRMKQRPIGDLVDALTINGAQVEYLEKAGSLPLKIAASGGFKGGRINLAAKVSSQYVSSLLMCAPYAKEPVTLKLVGGRPISLSYIEMTTAMMRSFGIDVQKSTTEEWTYHIPQGSYNNPPEYVIESDASSATYPLAIAAVTGTTCTVPNIGSASLQGDARFAVEVLRPMGCKVEQTATSTTVTGPADGVLRPLPNVDMEPMTDAFLGASVLAAIAQGEGGNHATRIYGIANQRVKECNRIEAMRVELAKFGVVCREHPDGLEIDGIDRSTLRHPAGGVFCYDDHRVAFSFSILSLVAPTPTLILEKECVGKTWPTYWDALKQKFGVSLKGKELAESEITHGPADRSDASIVIIGMRGAGKTTTGRWAAKALNRKFIDLDVELEQTEGKTIPDLIKERGWKGFRDAELSLFKRALTERPTGHVFACGGGIVEIAEARNILIDYHKNKGNVLLVMRDIKKVMEFLNIDKTRPAYIEDMMSVWLRRKPWYQECSNVQYYSRHSSSPELALAMDDFDRFIQFVSGKTDYLAAIRRKRLSFFMSLTLTDLRDSGDLLRTVASGSDAVELRVDLLKDPSSGNGIPSAEYVAEQISFYRSRVSLPIVFTIRTVSQGGKFPNDAHDAALELIMLAIRSGCEFIDLEITFPEDLLRKVAESKAHAKIIASHHDPQGKLNWANGSWIQYYNKALQYGDIIKLVGVAETLKDNTALREFKDWAEQAHPDVPVIAINMGDKGQLSRMLNGFLTPVSHPALPFKAAPGQLSAAEIRKGLSIMGEIPAKKFAIFGKPVSVSRSPAMHNTLFEQNGLPYVYTRLETDQAQDVKEFIRSPDFGGASATIPLKLDIIPLIDEVLNEAEIIGAVNTIIPVEGKDGSTRLIGRNTDWSGIVRCLREAGAHSNEGESSALVIGGGGTARAAIYALHNMGFSTVYVLGRSPEKIQNMASTFPTGFDIRVLENASDIENIPRVAVGTIPGDRPIEANMREILCTIFERSGRAADGKSAAVLLEMAYKPSVTPLMQLASDSGWTTIPGLEALVGQGVYQFEYWTGITPVYEVARNAVLGTDETK.

The segment at 1 to 380 (MAEPTKISIL…YEPKASVVSN (380 aa)) is 3-dehydroquinate synthase. Residues 44–46 (DTN), 81–84 (ENSK), 112–114 (GGV), and D117 each bind NAD(+). R128 serves as a coordination point for 7-phospho-2-dehydro-3-deoxy-D-arabino-heptonate. 137–138 (TT) provides a ligand contact to NAD(+). The 7-phospho-2-dehydro-3-deoxy-D-arabino-heptonate site is built by D144 and K150. Residue K159 coordinates NAD(+). 7-phospho-2-dehydro-3-deoxy-D-arabino-heptonate is bound at residue N160. NAD(+) is bound by residues 177-180 (FIDT) and N188. E192 contributes to the Zn(2+) binding site. 7-phospho-2-dehydro-3-deoxy-D-arabino-heptonate contacts are provided by residues 192–195 (EVIK) and K246. The Proton acceptor; for 3-dehydroquinate synthase activity role is filled by E256. 7-phospho-2-dehydro-3-deoxy-D-arabino-heptonate-binding positions include 260 to 264 (RNLLN) and H267. H267 provides a ligand contact to Zn(2+). H271 acts as the Proton acceptor; for 3-dehydroquinate synthase activity in catalysis. 2 residues coordinate 7-phospho-2-dehydro-3-deoxy-D-arabino-heptonate: H283 and K352. Residue H283 coordinates Zn(2+). Positions 393 to 838 (VIPGVPKDLN…WDALKQKFGV (446 aa)) are EPSP synthase. Catalysis depends on C820, which acts as the For EPSP synthase activity. The segment at 859–1051 (DASIVIIGMR…RRKRLSFFMS (193 aa)) is shikimate kinase. ATP is bound at residue 866-873 (GMRGAGKT). Positions 1052 to 1273 (LTLTDLRDSG…AAPGQLSAAE (222 aa)) are 3-dehydroquinase. The active-site Proton acceptor; for 3-dehydroquinate dehydratase activity is the H1175. K1203 (schiff-base intermediate with substrate; for 3-dehydroquinate dehydratase activity) is an active-site residue. Residues 1286–1573 (AKKFAIFGKP…NAVLGTDETK (288 aa)) are shikimate dehydrogenase.

In the N-terminal section; belongs to the sugar phosphate cyclases superfamily. Dehydroquinate synthase family. It in the 2nd section; belongs to the EPSP synthase family. This sequence in the 3rd section; belongs to the shikimate kinase family. The protein in the 4th section; belongs to the type-I 3-dehydroquinase family. In the C-terminal section; belongs to the shikimate dehydrogenase family. As to quaternary structure, homodimer. It depends on Zn(2+) as a cofactor.

The protein resides in the cytoplasm. The enzyme catalyses 7-phospho-2-dehydro-3-deoxy-D-arabino-heptonate = 3-dehydroquinate + phosphate. It catalyses the reaction 3-dehydroquinate = 3-dehydroshikimate + H2O. It carries out the reaction shikimate + NADP(+) = 3-dehydroshikimate + NADPH + H(+). The catalysed reaction is shikimate + ATP = 3-phosphoshikimate + ADP + H(+). The enzyme catalyses 3-phosphoshikimate + phosphoenolpyruvate = 5-O-(1-carboxyvinyl)-3-phosphoshikimate + phosphate. The protein operates within metabolic intermediate biosynthesis; chorismate biosynthesis; chorismate from D-erythrose 4-phosphate and phosphoenolpyruvate: step 2/7. It participates in metabolic intermediate biosynthesis; chorismate biosynthesis; chorismate from D-erythrose 4-phosphate and phosphoenolpyruvate: step 3/7. Its pathway is metabolic intermediate biosynthesis; chorismate biosynthesis; chorismate from D-erythrose 4-phosphate and phosphoenolpyruvate: step 4/7. It functions in the pathway metabolic intermediate biosynthesis; chorismate biosynthesis; chorismate from D-erythrose 4-phosphate and phosphoenolpyruvate: step 5/7. The protein operates within metabolic intermediate biosynthesis; chorismate biosynthesis; chorismate from D-erythrose 4-phosphate and phosphoenolpyruvate: step 6/7. The AROM polypeptide catalyzes 5 consecutive enzymatic reactions in prechorismate polyaromatic amino acid biosynthesis. The chain is Pentafunctional AROM polypeptide 1 from Talaromyces marneffei (strain ATCC 18224 / CBS 334.59 / QM 7333) (Penicillium marneffei).